We begin with the raw amino-acid sequence, 108 residues long: MSTHDILHRLSETLASRRHADPEKSYTAKLFSEGPDSILKKIGEECAELIMAAKDGKRLNIVWESTDVIYHVLVLLAFYGLSIEDVSQEMRRREGISGIDEKASRGTK.

It belongs to the PRA-PH family.

The protein resides in the cytoplasm. The enzyme catalyses 1-(5-phospho-beta-D-ribosyl)-ATP + H2O = 1-(5-phospho-beta-D-ribosyl)-5'-AMP + diphosphate + H(+). It functions in the pathway amino-acid biosynthesis; L-histidine biosynthesis; L-histidine from 5-phospho-alpha-D-ribose 1-diphosphate: step 2/9. This Dechloromonas aromatica (strain RCB) protein is Phosphoribosyl-ATP pyrophosphatase.